The chain runs to 279 residues: 4-hydroxy-3-methylbut-2-enyl diphosphate reductase (279 aa).

A [4Fe-4S] cluster-binding site is contributed by C12. Residues H42 and H74 each contribute to the (2E)-4-hydroxy-3-methylbut-2-enyl diphosphate site. Residues H42 and H74 each contribute to the dimethylallyl diphosphate site. Isopentenyl diphosphate is bound by residues H42 and H74. C96 serves as a coordination point for [4Fe-4S] cluster. H124 provides a ligand contact to (2E)-4-hydroxy-3-methylbut-2-enyl diphosphate. H124 contributes to the dimethylallyl diphosphate binding site. H124 contributes to the isopentenyl diphosphate binding site. The Proton donor role is filled by E126. Residue T162 participates in (2E)-4-hydroxy-3-methylbut-2-enyl diphosphate binding. C190 contributes to the [4Fe-4S] cluster binding site. (2E)-4-hydroxy-3-methylbut-2-enyl diphosphate-binding residues include S218, S219, N220, and S263. Dimethylallyl diphosphate-binding residues include S218, S219, N220, and S263. Isopentenyl diphosphate is bound by residues S218, S219, N220, and S263.

The protein belongs to the IspH family. [4Fe-4S] cluster serves as cofactor.

It catalyses the reaction isopentenyl diphosphate + 2 oxidized [2Fe-2S]-[ferredoxin] + H2O = (2E)-4-hydroxy-3-methylbut-2-enyl diphosphate + 2 reduced [2Fe-2S]-[ferredoxin] + 2 H(+). It carries out the reaction dimethylallyl diphosphate + 2 oxidized [2Fe-2S]-[ferredoxin] + H2O = (2E)-4-hydroxy-3-methylbut-2-enyl diphosphate + 2 reduced [2Fe-2S]-[ferredoxin] + 2 H(+). It functions in the pathway isoprenoid biosynthesis; dimethylallyl diphosphate biosynthesis; dimethylallyl diphosphate from (2E)-4-hydroxy-3-methylbutenyl diphosphate: step 1/1. It participates in isoprenoid biosynthesis; isopentenyl diphosphate biosynthesis via DXP pathway; isopentenyl diphosphate from 1-deoxy-D-xylulose 5-phosphate: step 6/6. In terms of biological role, catalyzes the conversion of 1-hydroxy-2-methyl-2-(E)-butenyl 4-diphosphate (HMBPP) into a mixture of isopentenyl diphosphate (IPP) and dimethylallyl diphosphate (DMAPP). Acts in the terminal step of the DOXP/MEP pathway for isoprenoid precursor biosynthesis. This chain is 4-hydroxy-3-methylbut-2-enyl diphosphate reductase, found in Alkaliphilus oremlandii (strain OhILAs) (Clostridium oremlandii (strain OhILAs)).